The sequence spans 458 residues: MLPDFMLVLIVLGIPSSATTGFNSIAENEDALLRHLFQGYQKWVRPVLHSNDTIKVYFGLKISQLVDVDEKNQLMTTNVWLKQEWTDHKLRWNPDDYGGIHSIKVPSESLWLPDIVLFENADGRFEGSLMTKVIVKSNGTVVWTPPASYKSSCTMDVTFFPFDRQNCSMKFGSWTYDGTMVDLILINENVDRKDFFDNGEWEILNAKGMKGNRRDGVYSYPFITYSFVLRRLPLFYTLFLIIPCLGLSFLTVLVFYLPSDEGEKLSLSTSVLVSLTVFLLVIEEIIPSSSKVIPLIGEYLLFIMIFVTLSIIVTVFVINVHHRSSSTYHPMAPWVKRLFLQKLPKLLCMKDHVDRYSSPEKEESQPVVKGKVLEKKKQKQLSDGEKVLVAFLEKAADSIRYISRHVKKEHFISQVVQDWKFVAQVLDRIFLWLFLIVSVTGSVLIFTPALKMWLHSYH.

The first 21 residues, 1–21 (MLPDFMLVLIVLGIPSSATTG), serve as a signal peptide directing secretion. Residues 22–237 (FNSIAENEDA…VLRRLPLFYT (216 aa)) are Extracellular-facing. Residues asparagine 51, asparagine 138, and asparagine 166 are each glycosylated (N-linked (GlcNAc...) asparagine). An intrachain disulfide couples cysteine 153 to cysteine 167. The next 3 helical transmembrane spans lie at 238–258 (LFLI…FYLP), 267–287 (LSTS…EIIP), and 300–320 (LLFI…VINV). The Cytoplasmic portion of the chain corresponds to 321 to 428 (HHRSSSTYHP…WKFVAQVLDR (108 aa)). Residues 429 to 449 (IFLWLFLIVSVTGSVLIFTPA) form a helical membrane-spanning segment.

Belongs to the ligand-gated ion channel (TC 1.A.9) family. Acetylcholine receptor (TC 1.A.9.1) subfamily. Beta-3/CHRNB3 sub-subfamily. Neuronal AChR seems to be composed of two different type of subunits: alpha and beta. CHRNB3/beta-3 subunit is only able to form functional nAChRs when co-assembled with another beta subunit. Participates in pentameric assemblies along with CHRNA4/alpha-4 and CHRNB2/beta-2 subunits and with CHRNA6/alpha-6 as well, forming stoichiometries such as (CHRNA3:CHRNB4)2:CHRNB3, (CHRNA4:CHRNB2)2:CHRNB3 or (CHRNA6:CHRNB2)2:CHRNB3.

The protein localises to the synaptic cell membrane. The protein resides in the cell membrane. The enzyme catalyses Ca(2+)(in) = Ca(2+)(out). The catalysed reaction is K(+)(in) = K(+)(out). It carries out the reaction Na(+)(in) = Na(+)(out). Its activity is regulated as follows. Activated by a myriad of ligands such as acetylcholine, cytisine, nicotine, choline and epibatidine. Functionally, component of neuronal acetylcholine receptors (nAChRs) that function as pentameric, ligand-gated cation channels with high calcium permeability among other activities. nAChRs are excitatory neurotrasnmitter receptors formed by a collection of nAChR subunits known to mediate synaptic transmission in the nervous system and the neuromuscular junction. Each nAchR subunit confers differential attributes to channel properties, including activation, deactivation and desensitization kinetics, pH sensitivity, cation permeability, and binding to allosteric modulators. Has an accessory rather than functional role and is only able to form functional nAChRs when co-assembled with another beta subunit. Participates in pentameric assemblies along with CHRNA3, CHRNA4, CHRNA6, CHRNB2 and CHRNB4. Modulates receptor assembly and increases receptor sensitivity to nicotine when associated with CHRNB2, CHRNA4 and/or CHRNA6 as well as CHRNA3 and CHRNB4. Seems to play a role in nicotine addiction. The chain is Neuronal acetylcholine receptor subunit beta-3 from Homo sapiens (Human).